Here is a 241-residue protein sequence, read N- to C-terminus: Agamous-like MADS-box protein AP1 (241 aa).

The region spanning 1-61 is the MADS-box domain; it reads MGRGRVQLKR…GKLFEYSTDS (61 aa). Positions 88–178 constitute a K-box domain; the sequence is QGNWSLEYSK…AKEIKEKEKT (91 aa).

In terms of tissue distribution, expressed in tendrils and flowers.

It is found in the nucleus. Its function is as follows. Probable transcription factor involved in flower development. The sequence is that of Agamous-like MADS-box protein AP1 from Vitis vinifera (Grape).